The primary structure comprises 293 residues: MNIQEMILTLQNHWSEHNCILMQAYDTEKGAGTMSPMTLLRSLGPEPWNVAYVEPSRRPDDGRYGENPNRLYQHHQFQVIMKPSPDNIQELYLESLKKLGINPLEHDIRFVEDNWENPTLGAAGLGWEVWLDGMEITQFTYFQQIGGLEANPVTVELTYGIERLASYIQDKENVFDLEWNNGVTIRDIFYQPEYEHSTYTFKESNTDMLFDLFSMYEQEAKQTMEKGLVFPAYDYVLKCSHTFNLLDAKGVISVTERTGYIARIRNLARSISKIYVSEREKLGFPMLQEKGAK.

Belongs to the class-II aminoacyl-tRNA synthetase family. As to quaternary structure, tetramer of two alpha and two beta subunits.

The protein resides in the cytoplasm. The enzyme catalyses tRNA(Gly) + glycine + ATP = glycyl-tRNA(Gly) + AMP + diphosphate. This is Glycine--tRNA ligase alpha subunit from Oceanobacillus iheyensis (strain DSM 14371 / CIP 107618 / JCM 11309 / KCTC 3954 / HTE831).